The chain runs to 779 residues: Acyl-homoserine lactone acylase PvdQ (779 aa).

The N-terminal stretch at 1-25 (MIISRPLCSFVFAGLSFAVILPAQA) is a signal peptide. A propeptide spans 202-223 (AQQAQALQLAAARNQRFALERG) (spacer peptide). The active-site Nucleophile is S224. Over residues 731–746 (ESSNPQSAHSSDQTEA) the composition is skewed to polar residues. The segment at 731 to 750 (ESSNPQSAHSSDQTEAFSKK) is disordered.

The protein belongs to the peptidase S45 family. In terms of assembly, heterodimer of an alpha subunit and a beta subunit processed from the same precursor.

The protein localises to the periplasm. The catalysed reaction is an N-acyl-L-homoserine lactone + H2O = L-homoserine lactone + a carboxylate. Catalyzes the deacylation of acyl-homoserine lactone (AHL or acyl-HSL), releasing homoserine lactone (HSL) and the corresponding fatty acid. Possesses a specificity for the degradation of long-chain acyl-HSLs (side chains of 11 to 14 carbons in length). This chain is Acyl-homoserine lactone acylase PvdQ (pvdQ), found in Pseudomonas syringae pv. syringae (strain B728a).